A 1280-amino-acid polypeptide reads, in one-letter code: E3 ubiquitin-protein ligase RKP (1280 aa).

A B30.2/SPRY domain is found at 82 to 269 (KLHGDLDVSV…CELNFGAYPF (188 aa)). The helical transmembrane segment at 551–571 (SVLVSLFSVILHFLSEGFAML) threads the bilayer. Residues 669 to 719 (DRGKNTAQSSRGRCSSIPERSSHVAAECSAGSFSEEIDDKPSTSNQSDPDF) are disordered. The chain crosses the membrane as a helical span at residues 834–854 (ALCMWVVQLLLVLSKMDSVFV). An RING-type zinc finger spans residues 1217-1252 (CCICYAGEANAMIAPCSHRSCYGCITRHLLNCQRCF).

The protein localises to the membrane. The enzyme catalyses S-ubiquitinyl-[E2 ubiquitin-conjugating enzyme]-L-cysteine + [acceptor protein]-L-lysine = [E2 ubiquitin-conjugating enzyme]-L-cysteine + N(6)-ubiquitinyl-[acceptor protein]-L-lysine.. Functionally, E3 ubiquitin-protein ligase that promotes the ubiquitination and proteasomal degradation of KRP1 and KRP2. The chain is E3 ubiquitin-protein ligase RKP (RKP) from Arabidopsis thaliana (Mouse-ear cress).